The sequence spans 375 residues: 23S rRNA (uracil(747)-C(5))-methyltransferase RlmC (375 aa).

4 residues coordinate [4Fe-4S] cluster: Cys-3, Cys-11, Cys-14, and Cys-87. Residues Gln-212, Phe-241, Glu-262, and Asn-307 each coordinate S-adenosyl-L-methionine. The active-site Nucleophile is Cys-334.

Belongs to the class I-like SAM-binding methyltransferase superfamily. RNA M5U methyltransferase family. RlmC subfamily.

It carries out the reaction uridine(747) in 23S rRNA + S-adenosyl-L-methionine = 5-methyluridine(747) in 23S rRNA + S-adenosyl-L-homocysteine + H(+). Its function is as follows. Catalyzes the formation of 5-methyl-uridine at position 747 (m5U747) in 23S rRNA. This chain is 23S rRNA (uracil(747)-C(5))-methyltransferase RlmC, found in Pectobacterium atrosepticum (strain SCRI 1043 / ATCC BAA-672) (Erwinia carotovora subsp. atroseptica).